Reading from the N-terminus, the 183-residue chain is uncharacterized protein (183 aa).

Belongs to the herpesviridae US1 family.

This is an uncharacterized protein from Human cytomegalovirus (strain AD169) (HHV-5).